The sequence spans 113 residues: uncharacterized protein (113 aa).

2 consecutive transmembrane segments (helical) span residues 1–21 (MLIA…FGTW) and 48–68 (IMLA…ALIV).

To M.tuberculosis Rv0039.

The protein resides in the cell membrane. This is an uncharacterized protein from Mycobacterium leprae (strain TN).